Consider the following 540-residue polypeptide: Collagen alpha-1(XXIII) chain (540 aa).

The span at 1–26 (MGPGERAGGGGDAGKGNAAGGGGGGR) shows a compositional bias: gly residues. Residues 1–28 (MGPGERAGGGGDAGKGNAAGGGGGGRSA) form a disordered region. Residues 1 to 34 (MGPGERAGGGGDAGKGNAAGGGGGGRSATTAGSR) are Cytoplasmic-facing. A helical; Signal-anchor for type II membrane protein membrane pass occupies residues 35 to 56 (AVSALCLLLSVGSAAACLLLGV). Residues 57-540 (QAAALQGRVA…GLPVPGCWHK (484 aa)) lie on the Extracellular side of the membrane. Disordered regions lie at residues 109–304 (AREA…GEQG) and 316–540 (LDAL…CWHK). 5 Collagen-like domains span residues 124 to 243 (GRRG…PGKK), 251 to 305 (QPGP…EQGD), 321 to 380 (GPPG…MGLS), 412 to 460 (GPPG…GPPG), and 463 to 522 (GLPG…PGLD). 2 stretches are compositionally biased toward low complexity: residues 140-156 (QSGRDGYPGPLGLDGKP) and 168-183 (PGDFGPRGDQGQDGAA). A compositionally biased stretch (pro residues) spans 185–195 (PPGPPGPPGAR). Pro residues predominate over residues 322-334 (PPGPQGPPGPPGI). The span at 350–362 (DGEKGPKGQKGDP) shows a compositional bias: basic and acidic residues. Residues 411–422 (PGPPGPPGPPGP) are compositionally biased toward pro residues. Composition is skewed to basic and acidic residues over residues 435-444 (DGAKGEKGAS) and 486-503 (RGEKGDRSERGEKGERGV).

As to quaternary structure, homotrimer. In terms of processing, undergoes proteolytic cleavage by furin protease to yield a 60 kDa soluble form that forms a homotrimer and exhibits a low affinity interaction with heparin.

The protein localises to the cell membrane. The polypeptide is Collagen alpha-1(XXIII) chain (COL23A1) (Homo sapiens (Human)).